Reading from the N-terminus, the 236-residue chain is Ribose-5-phosphate isomerase A (236 aa).

Residues 29–32, 86–89, and 99–102 each bind substrate; these read SGST, DGAD, and KGGG. Glu108 acts as the Proton acceptor in catalysis. Lys126 lines the substrate pocket.

This sequence belongs to the ribose 5-phosphate isomerase family. As to quaternary structure, homodimer.

The enzyme catalyses aldehydo-D-ribose 5-phosphate = D-ribulose 5-phosphate. Its pathway is carbohydrate degradation; pentose phosphate pathway; D-ribose 5-phosphate from D-ribulose 5-phosphate (non-oxidative stage): step 1/1. Functionally, catalyzes the reversible conversion of ribose-5-phosphate to ribulose 5-phosphate. This chain is Ribose-5-phosphate isomerase A, found in Prochlorococcus marinus (strain NATL1A).